Consider the following 160-residue polypeptide: MGITKKPDLNDPVLRAKLAKGMGHNYYGEPAWPNDLLYIFPVVILGTIACNVGLAVLEPSMIGEPADPFATPLEILPEWYFFPVFQILRTVPNKLLGVLLMVSVPAGLLTVPFLENVNKFQNPFRRPVATTVFLIGTAVALWLGIGATLPIDKSLTLGLF.

Helical transmembrane passes span 36–56 (LLYI…GLAV), 95–115 (LLGV…PFLE), and 131–151 (TVFL…TLPI).

This sequence belongs to the cytochrome b family. PetD subfamily. In terms of assembly, the 4 large subunits of the cytochrome b6-f complex are cytochrome b6, subunit IV (17 kDa polypeptide, petD), cytochrome f and the Rieske protein, while the 4 small subunits are petG, petL, petM and petN. The complex functions as a dimer.

It is found in the plastid. It localises to the chloroplast thylakoid membrane. In terms of biological role, component of the cytochrome b6-f complex, which mediates electron transfer between photosystem II (PSII) and photosystem I (PSI), cyclic electron flow around PSI, and state transitions. The sequence is that of Cytochrome b6-f complex subunit 4 from Solanum bulbocastanum (Wild potato).